The following is a 148-amino-acid chain: Deoxyuridine 5'-triphosphate nucleotidohydrolase (148 aa).

Substrate is bound by residues 67–69 (RSG), Asn-80, 84–86 (LID), and Met-94.

Belongs to the dUTPase family. Mg(2+) is required as a cofactor.

The enzyme catalyses dUTP + H2O = dUMP + diphosphate + H(+). Its pathway is pyrimidine metabolism; dUMP biosynthesis; dUMP from dCTP (dUTP route): step 2/2. Its function is as follows. This enzyme is involved in nucleotide metabolism: it produces dUMP, the immediate precursor of thymidine nucleotides and it decreases the intracellular concentration of dUTP so that uracil cannot be incorporated into DNA. This is Deoxyuridine 5'-triphosphate nucleotidohydrolase from Burkholderia ambifaria (strain ATCC BAA-244 / DSM 16087 / CCUG 44356 / LMG 19182 / AMMD) (Burkholderia cepacia (strain AMMD)).